The chain runs to 615 residues: Probable inactive purple acid phosphatase 24 (615 aa).

Positions 1–26 (MARVLGVLLCLLALFSSSLCLDHANG) are cleaved as a signal peptide. N-linked (GlcNAc...) asparagine glycans are attached at residues asparagine 129, asparagine 267, and asparagine 275. Aspartate 297 provides a ligand contact to Fe cation. An N-linked (GlcNAc...) asparagine glycan is attached at asparagine 318. Positions 338 and 341 each coordinate Fe cation. Aspartate 338 contributes to the Zn(2+) binding site. Zn(2+) contacts are provided by asparagine 371, histidine 460, and histidine 502. Asparagine 371 contributes to the substrate binding site. 502 to 504 (HVH) contributes to the substrate binding site. Position 504 (histidine 504) interacts with Fe cation. N-linked (GlcNAc...) asparagine glycosylation occurs at asparagine 592.

It belongs to the metallophosphoesterase superfamily. Purple acid phosphatase family. As to quaternary structure, homodimer. Fe cation is required as a cofactor. Zn(2+) serves as cofactor. As to expression, specifically expressed in flowers.

The protein resides in the secreted. The polypeptide is Probable inactive purple acid phosphatase 24 (PAP24) (Arabidopsis thaliana (Mouse-ear cress)).